Reading from the N-terminus, the 169-residue chain is Peptide methionine sulfoxide reductase MsrA (169 aa).

Cys10 is an active-site residue.

This sequence belongs to the MsrA Met sulfoxide reductase family.

It catalyses the reaction L-methionyl-[protein] + [thioredoxin]-disulfide + H2O = L-methionyl-(S)-S-oxide-[protein] + [thioredoxin]-dithiol. The enzyme catalyses [thioredoxin]-disulfide + L-methionine + H2O = L-methionine (S)-S-oxide + [thioredoxin]-dithiol. Its function is as follows. Has an important function as a repair enzyme for proteins that have been inactivated by oxidation. Catalyzes the reversible oxidation-reduction of methionine sulfoxide in proteins to methionine. This is Peptide methionine sulfoxide reductase MsrA from Streptococcus agalactiae serotype III (strain NEM316).